Consider the following 150-residue polypeptide: Putative biopolymer transport protein ExbB-like 2 (150 aa).

The next 3 membrane-spanning stretches (helical) occupy residues 5–25, 63–83, and 97–117; these read VDYGIIGFLIFLSVIVIAIAI, APYIGLLGTVMGIMLTFMDLG, and LALALKATGMGLLVAIPAIVI.

Belongs to the ExbB/TolQ family.

The protein resides in the cell inner membrane. The protein is Putative biopolymer transport protein ExbB-like 2 of Helicobacter pylori (strain ATCC 700392 / 26695) (Campylobacter pylori).